The sequence spans 562 residues: Dihydroxy-acid dehydratase (562 aa).

Position 78 (D78) interacts with Mg(2+). A [2Fe-2S] cluster-binding site is contributed by C119. Mg(2+) contacts are provided by D120 and K121. N6-carboxylysine is present on K121. C192 lines the [2Fe-2S] cluster pocket. E449 is a Mg(2+) binding site. S475 acts as the Proton acceptor in catalysis.

It belongs to the IlvD/Edd family. As to quaternary structure, homodimer. Requires [2Fe-2S] cluster as cofactor. Mg(2+) is required as a cofactor.

The catalysed reaction is (2R)-2,3-dihydroxy-3-methylbutanoate = 3-methyl-2-oxobutanoate + H2O. The enzyme catalyses (2R,3R)-2,3-dihydroxy-3-methylpentanoate = (S)-3-methyl-2-oxopentanoate + H2O. It participates in amino-acid biosynthesis; L-isoleucine biosynthesis; L-isoleucine from 2-oxobutanoate: step 3/4. The protein operates within amino-acid biosynthesis; L-valine biosynthesis; L-valine from pyruvate: step 3/4. Its function is as follows. Functions in the biosynthesis of branched-chain amino acids. Catalyzes the dehydration of (2R,3R)-2,3-dihydroxy-3-methylpentanoate (2,3-dihydroxy-3-methylvalerate) into 2-oxo-3-methylpentanoate (2-oxo-3-methylvalerate) and of (2R)-2,3-dihydroxy-3-methylbutanoate (2,3-dihydroxyisovalerate) into 2-oxo-3-methylbutanoate (2-oxoisovalerate), the penultimate precursor to L-isoleucine and L-valine, respectively. This Aliarcobacter butzleri (strain RM4018) (Arcobacter butzleri) protein is Dihydroxy-acid dehydratase.